Consider the following 190-residue polypeptide: Threonylcarbamoyl-AMP synthase (190 aa).

A YrdC-like domain is found at 7-190 (GDAIAAAIDV…ALTGELFRQG (184 aa)).

Belongs to the SUA5 family. TsaC subfamily.

It localises to the cytoplasm. It carries out the reaction L-threonine + hydrogencarbonate + ATP = L-threonylcarbamoyladenylate + diphosphate + H2O. Required for the formation of a threonylcarbamoyl group on adenosine at position 37 (t(6)A37) in tRNAs that read codons beginning with adenine. Catalyzes the conversion of L-threonine, HCO(3)(-)/CO(2) and ATP to give threonylcarbamoyl-AMP (TC-AMP) as the acyladenylate intermediate, with the release of diphosphate. This chain is Threonylcarbamoyl-AMP synthase, found in Shigella flexneri.